A 104-amino-acid polypeptide reads, in one-letter code: L-rhamnose mutarotase (104 aa).

Substrate is bound at residue Tyr18. Residue His22 is the Proton donor of the active site. Residues Tyr41 and 76–77 (WW) each bind substrate.

This sequence belongs to the rhamnose mutarotase family. Homodimer.

The protein localises to the cytoplasm. The catalysed reaction is alpha-L-rhamnose = beta-L-rhamnose. It participates in carbohydrate metabolism; L-rhamnose metabolism. Functionally, involved in the anomeric conversion of L-rhamnose. This Cronobacter sakazakii (strain ATCC BAA-894) (Enterobacter sakazakii) protein is L-rhamnose mutarotase.